We begin with the raw amino-acid sequence, 185 residues long: Protein-lysine palmitoyltransferase CyaC (185 aa).

Active-site residues include His33 and Asp102.

It belongs to the RTX toxin acyltransferase family. As to quaternary structure, homodimer.

The protein localises to the cytoplasm. The enzyme catalyses hexadecanoyl-[ACP] + L-lysyl-[protein] = N(6)-hexadecanoyl-L-lysyl-[protein] + holo-[ACP] + H(+). It catalyses the reaction (9Z)-hexadecenoyl-[ACP] + L-lysyl-[protein] = N(6)-[(9Z)-hexadecenoyl]-L-lysyl-[protein] + holo-[ACP] + H(+). Its function is as follows. Protein-lysine palmitoyltransferase that catalyzes palmitoylation of the protoxin (CyaA) at two internal lysine residues, thereby converting it to the active toxin. The protein is Protein-lysine palmitoyltransferase CyaC of Bordetella bronchiseptica (strain ATCC BAA-588 / NCTC 13252 / RB50) (Alcaligenes bronchisepticus).